A 211-amino-acid chain; its full sequence is ATP-dependent Clp protease proteolytic subunit (211 aa).

The active-site Nucleophile is the serine 106. Residue histidine 131 is part of the active site.

This sequence belongs to the peptidase S14 family. In terms of assembly, fourteen ClpP subunits assemble into 2 heptameric rings which stack back to back to give a disk-like structure with a central cavity, resembling the structure of eukaryotic proteasomes.

Its subcellular location is the cytoplasm. The enzyme catalyses Hydrolysis of proteins to small peptides in the presence of ATP and magnesium. alpha-casein is the usual test substrate. In the absence of ATP, only oligopeptides shorter than five residues are hydrolyzed (such as succinyl-Leu-Tyr-|-NHMec, and Leu-Tyr-Leu-|-Tyr-Trp, in which cleavage of the -Tyr-|-Leu- and -Tyr-|-Trp bonds also occurs).. Functionally, cleaves peptides in various proteins in a process that requires ATP hydrolysis. Has a chymotrypsin-like activity. Plays a major role in the degradation of misfolded proteins. This chain is ATP-dependent Clp protease proteolytic subunit, found in Maricaulis maris (strain MCS10) (Caulobacter maris).